A 531-amino-acid chain; its full sequence is Apolipoprotein N-acyltransferase (531 aa).

The next 7 membrane-spanning stretches (helical) occupy residues 8–28 (IILLSGVSRTFVGFLAGLLAV), 34–54 (FGIFAAAFVSFPVLVWLIDGV), 69–89 (PAAIGWSFGFGYFLGGLWWLG), 105–125 (LTVVGLPAVLGLFYALAVVIA), 136–156 (IAALALGFGIAEWLRGFLFTG), 178–198 (VVNLSTINMLAVFVFAAPALI), and 206–226 (AGLAIAAALFTAHVAFGFYRL). A CN hydrolase domain is found at 243 to 493 (VQPVIDQAKK…RGVIDTILPG (251 aa)). Residue Glu287 is the Proton acceptor of the active site. Lys351 is a catalytic residue. The Nucleophile role is filled by Cys405. A helical membrane pass occupies residues 507–527 (IFWLTTGILFLVAAISRLGFN).

The protein belongs to the CN hydrolase family. Apolipoprotein N-acyltransferase subfamily.

It localises to the cell inner membrane. It catalyses the reaction N-terminal S-1,2-diacyl-sn-glyceryl-L-cysteinyl-[lipoprotein] + a glycerophospholipid = N-acyl-S-1,2-diacyl-sn-glyceryl-L-cysteinyl-[lipoprotein] + a 2-acyl-sn-glycero-3-phospholipid + H(+). The protein operates within protein modification; lipoprotein biosynthesis (N-acyl transfer). In terms of biological role, catalyzes the phospholipid dependent N-acylation of the N-terminal cysteine of apolipoprotein, the last step in lipoprotein maturation. This is Apolipoprotein N-acyltransferase from Rhizobium meliloti (strain 1021) (Ensifer meliloti).